We begin with the raw amino-acid sequence, 727 residues long: Cadmium-transporting ATPase (727 aa).

The HMA domain maps to 12–75 (EMNVYRVQGF…AGAFENLKVS (64 aa)). Residues Cys23 and Cys26 each coordinate Cd(2+). A run of 5 helical transmembrane segments spans residues 106–126 (STLL…FVNG), 130–150 (LVTS…LFKV), 171–191 (IGAT…LFAI), 336–356 (IIMV…GGSW), and 364–384 (LAVL…ISIV). Asp415 functions as the 4-aspartylphosphate intermediate in the catalytic mechanism. 2 helical membrane-spanning segments follow: residues 672 to 694 (LNII…LLVI) and 699 to 721 (TLWI…SLRL).

This sequence belongs to the cation transport ATPase (P-type) (TC 3.A.3) family. Type IB subfamily.

The protein resides in the cell membrane. It carries out the reaction Cd(2+)(in) + ATP + H2O = Cd(2+)(out) + ADP + phosphate + H(+). With respect to regulation, inhibited by the antibiotic bafilomycin A1. Partially inhibited by DCCD, nigericin and FCCP. In terms of biological role, couples the hydrolysis of ATP with the export of cadmium. Involved in cadmium resistance. The sequence is that of Cadmium-transporting ATPase from Staphylococcus aureus.